Here is a 331-residue protein sequence, read N- to C-terminus: UPF0324 membrane protein SERP0111 (331 aa).

Transmembrane regions (helical) follow at residues 7 to 26 (ASFM…SYIL), 31 to 48 (ILHT…AMIY), 69 to 88 (LLKF…DILG), 93 to 115 (LLLI…NQII), 122 to 144 (SILL…APIL), 154 to 176 (SVGI…EAIF), 183 to 205 (YGAW…GIGG), 249 to 271 (IPYF…IPSL), 275 to 297 (IINV…NIVL), and 308 to 330 (FIVI…SIMF).

This sequence belongs to the UPF0324 family.

It localises to the cell membrane. The polypeptide is UPF0324 membrane protein SERP0111 (Staphylococcus epidermidis (strain ATCC 35984 / DSM 28319 / BCRC 17069 / CCUG 31568 / BM 3577 / RP62A)).